The sequence spans 256 residues: Phosphonates import ATP-binding protein PhnC (256 aa).

In terms of domain architecture, ABC transporter spans Leu-2 to Asp-246. Residue Gly-35–Thr-42 participates in ATP binding.

This sequence belongs to the ABC transporter superfamily. Phosphonates importer (TC 3.A.1.9.1) family. The complex is composed of two ATP-binding proteins (PhnC), two transmembrane proteins (PhnE) and a solute-binding protein (PhnD).

It localises to the cell membrane. The catalysed reaction is phosphonate(out) + ATP + H2O = phosphonate(in) + ADP + phosphate + H(+). Functionally, part of the ABC transporter complex PhnCDE involved in phosphonates import. Responsible for energy coupling to the transport system. This chain is Phosphonates import ATP-binding protein PhnC, found in Lactiplantibacillus plantarum (strain ATCC BAA-793 / NCIMB 8826 / WCFS1) (Lactobacillus plantarum).